Consider the following 303-residue polypeptide: Taste receptor type 2 member 13 (303 aa).

Residues 1–7 (MESALPS) lie on the Extracellular side of the membrane. Residues 8 to 28 (IFTLVIIAEFIIGNLSNGFIV) traverse the membrane as a helical segment. Topologically, residues 29-55 (LINCIDWVSKRELSSVDKLLIILAISR) are cytoplasmic. A helical transmembrane segment spans residues 56–76 (IGLIWEILVSWFLALHSLAIF). The Extracellular segment spans residues 77 to 85 (VSGTGLRIM). Residues 86-106 (IFSWIVSNHFNLWLATILSIF) form a helical membrane-spanning segment. Residues 107–128 (YLLKIASFSSPAFLYLKRRVNK) lie on the Cytoplasmic side of the membrane. Residues 129–149 (VILMILLGTLVFLFLNLIQIN) form a helical membrane-spanning segment. Residues 150 to 184 (MLIKDWLDRYERNTTWNFSMSDFETFSVSVRFTMT) are Extracellular-facing. 2 N-linked (GlcNAc...) asparagine glycosylation sites follow: Asn-162 and Asn-166. A helical membrane pass occupies residues 185–205 (MFSLTPFTVAFISFLLLVFSL). At 206-232 (QKHLQKMQLNYKGHRDPRTKVHTNALK) the chain is on the cytoplasmic side. Residues 233–253 (IVISFLLFYASFFLSILISWI) form a helical membrane-spanning segment. Residues 254–261 (SELYQNTV) are Extracellular-facing. Residues 262–282 (IYMLCETIGAFYPSSHSFLLI) form a helical membrane-spanning segment. Residues 283 to 303 (LGNAKLRQAFLLVAAKVWAKR) are Cytoplasmic-facing.

This sequence belongs to the G-protein coupled receptor T2R family.

Its subcellular location is the membrane. Its function is as follows. Receptor that may play a role in the perception of bitterness and is gustducin-linked. May play a role in sensing the chemical composition of the gastrointestinal content. The activity of this receptor may stimulate alpha gustducin, mediate PLC-beta-2 activation and lead to the gating of TRPM5. In Pan paniscus (Pygmy chimpanzee), this protein is Taste receptor type 2 member 13 (TAS2R13).